A 539-amino-acid polypeptide reads, in one-letter code: MSKLIEYDETARRAMEAGVDKLAETVRVTLGPRGRHVVLAKSFGGPTVTNDGVTVARDIDLEDPFENLGAQLVKSVATKTNDVAGDGTTTATVLARALVKTGLRLVAAGINPIALGSGIGKAADAVSEALLASATPVSGKDAIAQVATVSSRDQLIGDLVGEAMSKVGHDGVVSVEESSTLGTELEFTEGVGFDKGYLSAYFVTDFDAQQAVLEDPLILLHQDKISSLPDLLPLLEKVAESGKPLMIIAEDIEGEALATLVVNSIRKTLKAIAVKSPYFGDRRKAFLQDLAAVTGAEVVNPDAGLVLREVGLEVMGSARRVVVSKDDTIIVDGGGAPEAVEARVNLLRSEIDRSDSEWDREKLGERLAKLAGGVAVIKVGAATETELKKRKESVEDAVAAAKAAVEEGIVAGGGSALIQARNALKDLRASLSGDEAVGVDVFSEALAAPLYWIATNAGLDGSVVVNKVSEVPAGHGLNAATLTYGDLAADGIVDPVKVTRSAVLNASSVARMVLTTETAIVDKPAEPEDDGHGHHGHAH.

ATP contacts are provided by residues T29 to P32, D86 to T90, G413, N478 to A480, and D494. Residues I520–H539 form a disordered region. The segment covering K523–G533 has biased composition (basic and acidic residues).

This sequence belongs to the chaperonin (HSP60) family. In terms of assembly, forms a cylinder of 14 subunits composed of two heptameric rings stacked back-to-back. Interacts with the co-chaperonin GroES.

It is found in the cytoplasm. It catalyses the reaction ATP + H2O + a folded polypeptide = ADP + phosphate + an unfolded polypeptide.. Together with its co-chaperonin GroES, plays an essential role in assisting protein folding. The GroEL-GroES system forms a nano-cage that allows encapsulation of the non-native substrate proteins and provides a physical environment optimized to promote and accelerate protein folding. The polypeptide is Chaperonin GroEL 1 (Mycobacterium ulcerans (strain Agy99)).